The following is a 509-amino-acid chain: Fumarate hydratase, mitochondrial (509 aa).

Residues 1-43 constitute a mitochondrion transit peptide; that stretch reads MYRSARSLHRFSASLSDLRAAQRSIKARNVCPAPGLRHQTVRM. Substrate-binding positions include 144-146, 175-178, 185-187, and Thr-233; these read SGT, HPND, and SSN. His-234 (proton donor/acceptor) is an active-site residue. The active site involves Ser-364. Substrate contacts are provided by residues Ser-365 and 370-372; that span reads KVN.

The protein belongs to the class-II fumarase/aspartase family. Fumarase subfamily. In terms of assembly, homotetramer.

Its subcellular location is the mitochondrion. It localises to the cytoplasm. The protein localises to the cytosol. It is found in the nucleus. The protein resides in the chromosome. The enzyme catalyses (S)-malate = fumarate + H2O. It participates in carbohydrate metabolism; tricarboxylic acid cycle; (S)-malate from fumarate: step 1/1. Catalyzes the reversible stereospecific interconversion of fumarate to L-malate. Experiments in other species have demonstrated that specific isoforms of this protein act in defined pathways and favor one direction over the other. In terms of biological role, catalyzes the hydration of fumarate to L-malate in the tricarboxylic acid (TCA) cycle to facilitate a transition step in the production of energy in the form of NADH. Its function is as follows. Catalyzes the dehydration of L-malate to fumarate. Fumarate metabolism in the cytosol plays a role during urea cycle and arginine metabolism; fumarate being a by-product of the urea cycle and amino-acid catabolism. Also plays a role in DNA repair by promoting non-homologous end-joining (NHEJ). In response to DNA damage translocates to the nucleus and accumulates at DNA double-strand breaks (DSBs): acts by catalyzing formation of fumarate. In Danio rerio (Zebrafish), this protein is Fumarate hydratase, mitochondrial.